Consider the following 333-residue polypeptide: NADH dehydrogenase (ubiquinone) complex I, assembly factor 6 (333 aa).

The N-terminal 44 residues, 1–44, are a transit peptide targeting the mitochondrion; sequence MAASTLGSAWGPLRLGVPGLCRRRPPRGLWARARRLSEPVASGR.

Belongs to the NDUFAF6 family.

It localises to the mitochondrion inner membrane. In terms of biological role, involved in the assembly of mitochondrial NADH:ubiquinone oxidoreductase complex (complex I) at early stages. May play a role in the biogenesis of complex I subunit MT-ND1. The chain is NADH dehydrogenase (ubiquinone) complex I, assembly factor 6 (NDUFAF6) from Bos taurus (Bovine).